We begin with the raw amino-acid sequence, 69 residues long: MNSDIISGKWTQLKGKAQAKWGDLTDDDFKVAEGNAEYLQGKLQERYGWDRDRAQTEVRAFEKSLRDDT.

It belongs to the UPF0337 (CsbD) family.

The sequence is that of UPF0337 protein XAC4007 from Xanthomonas axonopodis pv. citri (strain 306).